A 6995-amino-acid chain; its full sequence is MELYLSACSKTANVAANKAASSTVAEDSQQCVDGRHKTPIPGVGAAQLLDLPLGVKLPMIPGTDTVYFTTNISEKLFRPSYGFNLSDPYCRLLETQYKSLHDPHLRTYYKRKDILRRLKKGGYITSNNKIVCSLRELNKYRQYLTSLKLDFERNYLREQQLISKQLHKLQETSQLPHCSDVTRFQNWLLQDNTHSIKDQERLLRHRYLDMISKELEQLERTAEEQRLLRIDRDERRQREYTRKKLTLRRKIEEEWKTKEMMLLTKIGEDVKREQKIEEQRRKSREESDRKKQAMLEKKMAYHLQKMQDTGLKDDIGRNGFDYRGQNGTTFESSSKKRKKQFDDIKIVYPDGDQKAYRGTSGQVSATVNQSQSSSKDVTKVSASSVTYPAEVQNSSSEQKRSEVTKRLSDERGKNSTDDSARESIISTQLSPTRNAKLSQISLDHQKEEKEMKSTWNGGLSKKSSYAGEPGSPTDAPPQGIFSFPVNSNTQQNLQHCLKDKVTSEELNSIIQNIMTWVVATVTSILYPAITKYEERVQNNTYPVTDDSDLSSDSSSFCSTCSEGFTYRNYTAKTLPVDPCTFASDMPIKKPPTPLKPPSAHVERTVIDQTYQRQGQSVPSQVNYQKTSLDYQFPKIGSSKSDSHLLTSLETCTKKSKDATTETESLEISLLYDKKAKAMDQIKNLKNVFVNFKCHLKGETQLILESIFQEIMSDLSQAIPSLSSVTAEVFVDQTETEREELLSNVDICSVASEIVENMLEKLESAVEKRCVQMFSQEDLSVDIKPSLSTSGDYLSSVETKPSEETLSYTLEPMCDVADDMVHAILEKLMILASYKKNDVPPEDTTKHFQQTKTEPIHKVHQQTEQKKASFASDPANQIVKEEIQSLISSIFSQSSLVGYVEEAISTILGYVQTELNNERLIASEETVVLLQLLDDVLTQLHQQPVKAGVKKPRRPRVRNLSDPEEKYRVTGTRPFNNLKSKRPFPPVNVPGMVLYSEDDDEEIDNFVQSVLDSSFNDEKSSSQEQVPNYWPKKRDTYFESKRSNKLPTKSTFQNKVGSHDWGLKLELSLSSEDIVKTKHCLGQEPSIFSQDQKHQIQKASENIVKHILTDMLKDMSSDSSSHLGSQTGKGASAFISEKSQGLSDQEWMEQMFSVSEICAFAHEITDSVINILHKASMHIPNTIKNAFTSVHPTHVAPFDTAHTSKETPSKMPFKVWFDSEKKMKYLSSLNMEHEKTSQLRSGKCEPKRVNDITDKITNTIFKRLKLFVCPKLQIGNKSSLIEKSLHSQLSTYTMKIVNIILHAIQSELEINKTKPNLKETDHPKCHKNKGWFTDPNKVVESRVTSVNDDIMESPLLTCICEMISSTNEDKKNTSTYTDKTLSTSICESGNFHKQSILSNKQDKNSFCQLLAKPCLQHSLADEKDFKVSSKLEVLDQIGDTLHEMLGKLTGDHPDPQPSCSHQNTETIDKDPPTMSNTQLISKAILENVLAKLCDVDIDTSIVNSGPKTVPESLDIDNLSFASTMEEMAKCTNIISNIISKIMKDNKEVTKSKAKNDLPTSSKTEIPKEMCPQNLKNIASDILNMVFAKLEHFASGSVVNVGNLNDENKKEHTVDWECESNSSPADSHDKSLQSTLYSHAKKVSNGILKAIQTELNMNPPDCKTDKKRSPEETQILTNIVDLILDVVSSDMFAEPESENQSNENYGYRPTYGNFLPGGAESDSFLDDDTQNKELIRDATSFNEETRTLSTDQMGLERTLSKIEVKLKEPHRSPIVPIIRNILNEIFQSALINQLNVFSLSRAHFSGMPQNAPTSSTQTSAHFMDQMMGPLVSDTDVSIVVNDVVRTVFHKLYSAAMTERHVSENRGKTIILSANVSFRECTYGGNAPVSGLNENVCDLQSSWNVDKQIKINVVEDIVQAILGNLETFAASKVESLFCPQVKFTVPVTLPVMQEEGSLSQALSGKDSYSDNQLPCLVDHGNPEQMDSWYQMSLSKLNIYAKDVARKILQGIKHELDKEQESPLLTNNIVVSENIASQVVNKVLDIVSCKSKCDKKSSDKDHYSEQQVGIIEQLVNKREYRKILEFQIQDTIEGILCDIYENILYQNNLSFATPTLKYGIPAKHSEANFEQVVMGTNIIPKVSVPKADVILVSKDIVDIVLHNLTSLVVLAINAKDSAPARVAIYDIFPKPQFQQPLSITQRTEETPGHFSHSKNKNLGSPDVYQVPVNGKEDTKELAPDPCKENANRITQPIFNRLQSFATERINSLMTPAFQSKGNVFVSPQFEIGKDDNCIFHEPGQAESDVDVLKLTTRTVTSQELVEPIFTSCRENFGTTPHLSQTNLKDYAAFIASTILKLIKNDLDLEVQSMHTYSSHILFQKNMIVSEIVNNILKILPNKEPIKEFFLSSPENSSCSQLTISSEDLVGYKEKEKATALPQFTNDSLEENQVTVEKESQRDVLEEIFMRKGESKPREKTEILRTVEEVLKKLSQKIMEIIGHVAPFNESPHTVSKSKSKTAAATQKKFFQSRINNVSNDILENVLSEMHSVVVTSLYRNNKSKREGEMHDSSDSSSVKPSGSRETKPTRKRSSPLRLGVPQMHPHADNLNALVLENTILPYSPLQIGKYLVQIVLENLSNFVSLHLEEGYPPEGSYDDLYLLRLHNAKLSPKNSPRPGGKASLKMRSKINSLSKFKTKPHLGISSTKTKIKNKLSAGEKTPRESRSKTALGLPQTPQVEDTKTTLKTKLPVAELRLYATNIITDILQVILSSLERAAQHRAMFNTKVLASSQILEASKIVNAVLQELYATNNDNLASPINISSLSDRRLSKQNLGAGYPTEQPCFYLENVSSQLEQIFPKEGILKKMFDKWQTETSDTETEKSKLLTIAENILTEISIKAKDLEYSLSLLNLPPLEECENRLYDRFKGVSTRAEDTNAQINMFGREIVEMLFEKLQLCFLSQMPTQDSNGILTSRKEHGTSKSKHGVPTKPILGGIQTYNSKMADQVSMSPSNQIVHEIVERVLHMLESFVDLKFKHISKYEFSEIVKMPIDNLFQAQQRQLSKKMLPKLPFRKFGDESKPGTIISKDDGQNTLLQVHLFHSELLTYSVTAVSGMLRIIKNKLDKEISQMEPSPVSILKENITASEIIGTLIDQCSHFEESLIKNLPTKHWFQGTENVYIVNQVEFATPVKMPPSNTSDTPRTRRSSQGSVSGMGFSSEDDMKEKYSVTSNSSSHISSCVENTNKSLEPMGRSNSEAMPSGSRHKAHDHGQRKPNFTPFEQVTKTHNFLPQGSVLQKLFKKVNDSTEESLKQVLSFIETGKRENPRVFHYETTKSAEPNEIKTTAPPLKICLAAENIVNTVLSSYGFPHQPNTNESTETMKPFFMSRQIPLSEVCEGQKDTEKTLLKTWYSRKALIQEEESEGLEACQEDFSLLHKWKNKKPQMTTETVEETKTIVFADHELGPNEMHLVARHVTTSVITHLKNFKTGVSTEKFSHVSSLSKKIDDANQPLISIYSNSSVCQFCEHLSDAVICYLFLNISDGIKKCSREKAWEIQDAIIDKNVIIHSQLYKTRSISIGDLALSIFEVIVEVLANRNMINADKAHQASIKAKYMFCPGVTSSDFDDIFQDLLKEVIFVLSKILGINHFENNVRNKSYPTLKNNLPVFNKVNTIENQIGPRKLESSPPLTDQLAQKNKLNYLARRLNSLVGSLRSRESKEVVNEVFNIVLDLFLPDEIPDGDLSSGKLAKTFSSSNNQPSNRSLANNVGLSPKSIFLLNIVCEKLIRTLLEKCMGGTPFFEDSSLFREIPEECQHVKVLPSVQGGGFDYREAPMDCEQFQGDYMSELLENLADVDQDLLSSDCILNVISHSLVKSLMDKLSHGLQQAPFENKYRNYRTREMQPFITKAKRQELIEPEETKGHVGFMSYDNNFLTKSLNNTNANSFKKHTQFGKKHAGKSISLSFSDGKESRGINTACFHKLCQRGVNGGVFSATFLEEIISELFYNLSTSLWKKNPNITEAWLNEINTLLINNVVKKLNDAEITVLRYPEERLYFPSAHKGCIAKIVDSIYYDVLQQYEFTVTCGGNLPYDNTPVAKRISNSILLEVIDYQLPSCFKGKLRSNLYHTLNAEIILYKLHNSLKNFNSEPMTSKDYSTMLPHSFLEYVIRRVLAQLISLPIKSSSLEKKYLASSDFNEMSNCITNKVMSAISKHKIWLTIYDNQCLYTDKNLQKMVDSVYSNILQMSSSVDSIQKNIISRSPIMIDQIASFIIQEIIENHLQPFLCGERLPRPKTPLDEVSYMVKQVLSDVVESHKSQKPSPFGIYPDKLVGETVTRVLSKIFSPNTNINVELENVTQKIVSSVHKHLDKAKIPILCHKQPPFPFSNTDIVDELVTSVYKNVLKQHGLDPDIDESVNGEVFVENITKLITAAISDYLLHPLFSGDLPAASCSNSVTDHTVYDILGDINKSSKPNQTLPLYNTLLPYTFLEDMIRVLLSKFFPSAPKIDSYKAASKDKEGVNFNEIASNLISDIRRKISQHEIRFSKDEDKTKSFYSENDVQHLVDAVFMNILENYGSPESVEQNITKSNDVFIDQIAGFIIKYICEHHLQPFLERKQLSTSSYKYSDDDRQDLLYGSAYSSTFLEDVVSGVVSKIFHRVIGIVQVNSTINSENILFDKAENLIYWITEEFSKAQVTTIENAEERLSLSPVEGNILQKIIDTVYSKILEEHEMEIMPNKDFLNDTKALASQITEIILSEISYFQIPPDLVANLPLRLHSKLSQNVLVNKVHYDISKSRFRRQASTMYTTMLSHVHLEKIVTQLMSQINPSDSSVGHSDTYQSELSNTVVKLINEIMSIISKHAICIVKHGNEKQSMISEKEMQSMVDSIYADLSHSNLYQSLTKDKKGLSSIPVSKIANFIIKEIFNHHLESFLSGDKSILSASVAQTCKKKATTSTKQRELSFIVNSAVFLEEVITELLCKILQTFIQNSLSMETPERAIAEIMDIVTTLVKSIVFEFTSSEILVAEHLDESLWFSETYKEMVQKTVNSVYGNIFYEYKSLTQLHRAVQYDTSGFGGKMYHFLLEEMYDYQVQSLVSGELMPSCYASPQSANIIKNVLNVILKDTNALPSCITVLPCSLIENMIYKLLENIFPSDDTTNELKKEEKEEAGPDDVDEFMAAASKLTDEIIQEISEHEIRFANAEDTASMIYETTENFIDSVCNNILKNSEFQAEVQKDAHKKGGSFLSKIAGSIIKEIMDHYLQLFLYGEGSHSSKLPHFGGASVVAKSGKEKAPSSLFSAAFLEDVIVDLAHKFCSFLTLTDDARKKDLPEAEIVSLAIKFANSLIRDFRKSGIKVLPHAEEIFSFPPIAKETIDEISNFVYDQFIGKLGADGIQKDGTGNMVIEMVSSLAQKAISTFKIQPLFSGDWCSTFFSFLDAENISQRVQLLPKETSMQISGALKQNQLALSKITSIKKDDTQDPILNSIATIMKSNIINLLSGPSAGVTDAKKEDESKVKPATRETTSPPTSPPATMKSQGSQVQQLATSPPTSMKSQRIQVQQSVMSPPTTMKGKGAQVQQFATSPPTSMKSQGSQVQQSAMSPPTTMKSRGAQVQESVTSPFTTKESRGAQVQQSAMSPPPSMKDRGAQVQESSTSPPTTMKSRGAQVQHLSSKYKGNETGKENLVLVNEQGQILEIFTHFAVAKTVENSPEKEVFISDLKIQNEKKLDVSKSSVKTDDRPMSKDKETMTEKTVLIPQQPVKEERKQSVVKTDTEEEQYSENECVENVIENIYDNVFIVSSQEPLDFSRPIYSRSLTSDKALVILKDSAQLVPAKDLSSSGHRDIAAKEKASKETETKIRRDRSETKRSKEMKSKSSMTDHPKPSESKSKIVPAKFLEDVIAELVNKLVFTFISDKTTDTNEQKPGELYDTAMRLVNSMTKELSDAEIKVFRPEKEDEVQAAKEPAPTSPPEVKETVTKEPSPSTNIKNEDQMSDVQKTPEQSSPDKLPALEKIPSIEKSIVNKIVHSCVCNIFKECKSQESICENINSNGENLAKRLTSTVINEIFQHQLNLIFSDEVPASACVPLESKDVEQKVQNVVQTVSKECQTASPYTVQLPYKFLEDVTSGLLAKVFSKLSNVKTKLTPENVLTQLDFLQSNLVKTIAAEISKNEDLIIQYVESLHPNDDEVIQLVVQTIYNNLLPQFGSQEILQKCIISGCKLLSKTIVDLVLREVTGNQLQNYFGGELTPIQCAEVDNVVENILTNVVLTTPSQPSGPRKLSYNIIETIAVKFLSKLLSVFPKGHPERTKSQETEMRKITSKILHSIQEFISKSKIKVVQPVKESEAVPSADKAAIEKVVNSVYTNLLKHCGSPTSAFEDLMRKSDVISDIIGFSMVKEISNSEFQPQAEEELSSSELALEAVKIMEKVVKIIDELKSQEKPASITDVMLDSRVLEEALALFLAKLVKTPGPASKDTTSLTKPELNKIASQLTKSVTAEISKSNISLVESNHEEQSLDPENIEVISQVVESVYSNVVKQSGTENELSDIKGTKKAFPKKVASLIVDGVSSVPSCRVITESSYTAAHGDLDTNRIIEKAQKHAALMSSDSDKDSKKELEDEFPVRIVPHVRNKPLRIDPNIVSDHLAVISMKTQPLETLQMDCLKRTGCSIAELRRNSIRGIGPSSTDVSEMGTRQKERRISLDRTGRLDVKPLEAVGRNSFQNVRRPDITRVELLKDINNKTDLIIRLVAHDIGRKESDSSLSEGMVSDEEEVVLGEVVGDQCLRKISGGRVQQVKKSAESHVVSSKTATSTSNLKRFLALSKCCQPTSGENIESIEESGIQIMDPNKAYVKRAAAELDMPSCKSLAEETTSRDKLQYKEEEILASEPTHYFIHRIMSTSSYNQEDLISGEAEEFLPDAKANALEESCQEPQEGNSNSLEFVTIYKGSKHIAGSARLSKEHVSEMPRSSISKQGSRVLAKVSSTLSKVFSRSSGSIPKSSSPPHQDKR.

Disordered regions lie at residues 273-292, 308-336, and 351-476; these read EQKI…RKKQ, DTGL…SSKK, and GDQK…TDAP. Residues 359-396 show a composition bias toward polar residues; that stretch reads TSGQVSATVNQSQSSSKDVTKVSASSVTYPAEVQNSSS. Residues 397 to 421 show a composition bias toward basic and acidic residues; the sequence is EQKRSEVTKRLSDERGKNSTDDSAR. Residues 424 to 442 show a composition bias toward polar residues; it reads IISTQLSPTRNAKLSQISL. Serine 430 carries the post-translational modification Phosphoserine. Basic and acidic residues predominate over residues 443-452; it reads DHQKEEKEMK. Polar residues predominate over residues 453–463; sequence STWNGGLSKKS. Residues 665–692 are a coiled coil; that stretch reads LEISLLYDKKAKAMDQIKNLKNVFVNFK. Disordered stretches follow at residues 1452–1472, 2554–2595, 2699–2731, 3182–3270, 5489–5665, 5719–5740, 5823–5878, 5943–5996, and 6973–6995; these read PDPQ…DPPT, KSKR…VPQM, TKTK…TPQV, PVKM…PNFT, GPSA…KYKG, SKSS…MTEK, KDLS…SKSK, KEDE…PDKL, and SKVF…QDKR. Over residues 2555–2565 the composition is skewed to basic and acidic residues; sequence SKREGEMHDSS. Over residues 3187-3204 the composition is skewed to polar residues; it reads PSNTSDTPRTRRSSQGSV. A compositionally biased stretch (low complexity) spans 3220-3231; that stretch reads SVTSNSSSHISS. The segment covering 3232-3250 has biased composition (polar residues); sequence CVENTNKSLEPMGRSNSEA. The segment covering 3255–3265 has biased composition (basic residues); it reads SRHKAHDHGQR. Positions 5496 to 5509 are enriched in basic and acidic residues; sequence DAKKEDESKVKPAT. 3 stretches are compositionally biased toward polar residues: residues 5523–5557, 5565–5625, and 5638–5650; these read MKSQ…SPPT, QVQQ…QSAM, and VQES…TTMK. 2 stretches are compositionally biased toward basic and acidic residues: residues 5719–5738 and 5829–5877; these read SKSS…ETMT and GHRD…ESKS. The span at 5982 to 5993 shows a compositional bias: polar residues; that stretch reads SDVQKTPEQSSP. Residues 6977-6995 show a composition bias toward low complexity; the sequence is SRSSGSIPKSSSPPHQDKR.

As to quaternary structure, may interact with AKAP4. Predominantly expressed in testis.

Its function is as follows. Plays a role in spermatogenesis. The polypeptide is Fibrous sheath-interacting protein 2 (Fsip2) (Mus musculus (Mouse)).